A 185-amino-acid chain; its full sequence is Ribosome-recycling factor (185 aa).

The interval 138-160 (AMDKAVKDGEVGEDEGARGEKEL) is disordered.

This sequence belongs to the RRF family.

Its subcellular location is the cytoplasm. Its function is as follows. Responsible for the release of ribosomes from messenger RNA at the termination of protein biosynthesis. May increase the efficiency of translation by recycling ribosomes from one round of translation to another. This chain is Ribosome-recycling factor, found in Micrococcus luteus (strain ATCC 4698 / DSM 20030 / JCM 1464 / CCM 169 / CCUG 5858 / IAM 1056 / NBRC 3333 / NCIMB 9278 / NCTC 2665 / VKM Ac-2230) (Micrococcus lysodeikticus).